Consider the following 449-residue polypeptide: QVQLVQSGGGVVQPGRSLRLSCAASGFTFSRYTIHWVRQAPGKGLEWVAVMSYNGNNKHYADSVNGRFTISRNDSKNTLYLNMNSLRPEDTAVYYCARIRDTAMFFAHWGQGTLVTVSSASTKGPSVFPLAPSSKSTSGGTAALGCLVKDYFPEPVTVSWNSGALTSGVHTFPAVLQSSGLYSLSSVVTVPSSSLGTQTYICNVNHKPSNTKVDKKVEPKSCDKTHTCPPCPAPELLGGPSVFLFPPKPKDTLMISRTPEVTCVVVDVSHEDPEVKFNWYVDGVEVHNAKTKPREEQYNSTYRVVSVLTVLHQDWLNGKEYKCKVSNKALPAPIEKTISKAKGQPREPQVYTLPPSRDELTKNQVSLTCLVKGFYPSDIAVEWESNGQPENNYKTTPPVLDSDGSFFLYSKLTVDKSRWQQGNVFSCSVMHEALHNHYTQKSLSLSPGK.

Glutamine 1 is subject to Pyrrolidone carboxylic acid. 4 Ig-like domains span residues 1 to 96 (QVQL…VYYC), 125 to 218 (PSVF…KKVE), 240 to 339 (PSVF…KTIS), and 348 to 444 (PQVY…KSLS). The segment at 1 to 119 (QVQLVQSGGG…GQGTLVTVSS (119 aa)) is variable (V) domain, involved in antigen recognition. Intrachain disulfides connect cysteine 22-cysteine 96, cysteine 146-cysteine 202, cysteine 263-cysteine 323, and cysteine 369-cysteine 427. N-linked (GlcNAc...) asparagine glycosylation occurs at asparagine 73. A constant (C) domain region spans residues 120-449 (ASTKGPSVFP…QKSLSLSPGK (330 aa)). N-linked (GlcNAc...) (complex) asparagine glycosylation is present at asparagine 299.

In terms of assembly, immunoglobulins are composed of two identical heavy chains and two identical light chains; disulfide-linked.

The protein resides in the secreted. It is found in the cell membrane. Immunoglobulins, also known as antibodies, are membrane-bound or secreted glycoproteins produced by B lymphocytes. In the recognition phase of humoral immunity, the membrane-bound immunoglobulins serve as receptors which, upon binding of a specific antigen, trigger the clonal expansion and differentiation of B lymphocytes into immunoglobulins-secreting plasma cells. Secreted immunoglobulins mediate the effector phase of humoral immunity, which results in the elimination of bound antigens. The antigen binding site is formed by the variable domain of one heavy chain, together with that of its associated light chain. Thus, each immunoglobulin has two antigen binding sites with remarkable affinity for a particular antigen. The variable domains are assembled by a process called V-(D)-J rearrangement and can then be subjected to somatic hypermutations which, after exposure to antigen and selection, allow affinity maturation for a particular antigen. This Homo sapiens (Human) protein is Immunoglobulin gamma-1 heavy chain.